The sequence spans 127 residues: Stationary phase protein 3 (127 aa).

Helical transmembrane passes span 29–49 (LFLFLFVFVFVFIFVYFFYVI) and 63–83 (ANSIWYYLSIINIFFPLCFFL). N-linked (GlcNAc...) asparagine glycosylation is present at Asn86.

It is found in the membrane. Functionally, required for survival during stationary phase. The sequence is that of Stationary phase protein 3 (SPG3) from Saccharomyces cerevisiae (strain ATCC 204508 / S288c) (Baker's yeast).